Reading from the N-terminus, the 283-residue chain is MTAQLIDGNALAKTIRAEVAGRTAALKAKGVEPALSIILVGSDPASQVYTKHKVNDSTETGLAATLETYPADMSEAALLDRIRALNDDPKVHGILVQLPLPRHMDSQKVIETISPAKDVDGFHVASAGALMTGAPGFWPCTPYGCMKMLESIGYDLRGKHAVVIGRSNIVGKPMAMMLLARSATVTICHSATQDLAAFTRQADVIVAAVGKRNILTAGMVKPGAVVIDVGMNRKEDGKLAGDVDFDGVKEVAGWITPVPGGVGPMTRAMLLVNTLEAAERAAK.

NADP(+)-binding positions include 165–167 and Ser-190; that span reads GRS.

Belongs to the tetrahydrofolate dehydrogenase/cyclohydrolase family. In terms of assembly, homodimer.

It catalyses the reaction (6R)-5,10-methylene-5,6,7,8-tetrahydrofolate + NADP(+) = (6R)-5,10-methenyltetrahydrofolate + NADPH. It carries out the reaction (6R)-5,10-methenyltetrahydrofolate + H2O = (6R)-10-formyltetrahydrofolate + H(+). It participates in one-carbon metabolism; tetrahydrofolate interconversion. Functionally, catalyzes the oxidation of 5,10-methylenetetrahydrofolate to 5,10-methenyltetrahydrofolate and then the hydrolysis of 5,10-methenyltetrahydrofolate to 10-formyltetrahydrofolate. The protein is Bifunctional protein FolD of Variovorax paradoxus (strain S110).